We begin with the raw amino-acid sequence, 99 residues long: Large ribosomal subunit protein eL36 (99 aa).

Belongs to the eukaryotic ribosomal protein eL36 family. As to quaternary structure, component of the large ribosomal subunit. Mature ribosomes consist of a small (40S) and a large (60S) subunit. The 40S subunit contains about 32 different proteins and 1 molecule of RNA (18S). The 60S subunit contains 45 different proteins and 3 molecules of RNA (25S, 5.8S and 5S).

The protein resides in the cytoplasm. Functionally, component of the ribosome, a large ribonucleoprotein complex responsible for the synthesis of proteins in the cell. The small ribosomal subunit (SSU) binds messenger RNAs (mRNAs) and translates the encoded message by selecting cognate aminoacyl-transfer RNA (tRNA) molecules. The large subunit (LSU) contains the ribosomal catalytic site termed the peptidyl transferase center (PTC), which catalyzes the formation of peptide bonds, thereby polymerizing the amino acids delivered by tRNAs into a polypeptide chain. The nascent polypeptides leave the ribosome through a tunnel in the LSU and interact with protein factors that function in enzymatic processing, targeting, and the membrane insertion of nascent chains at the exit of the ribosomal tunnel. This chain is Large ribosomal subunit protein eL36, found in Candida albicans (strain SC5314 / ATCC MYA-2876) (Yeast).